Consider the following 194-residue polypeptide: MAIREILEVPDPRLKTVSEPVQPDEFNDDLKQLVDDMFETMYAAPGIGLAAIQVGVPKRVLVIDLQEPDMDAEPEECGHDHGDGEGAHKHYPVKNDPRIFINPEIIDPNEELSTYQEGCLSVPEIYADVDRPKTCTVKYQDLTGKTHQEDLDGLLATCLQHEMDHLEGILFIDHLSRLKKQMALKKLKKMRQAA.

A disordered region spans residues 71-93 (DAEPEECGHDHGDGEGAHKHYPV). The span at 76–93 (ECGHDHGDGEGAHKHYPV) shows a compositional bias: basic and acidic residues. Cysteine 119 and histidine 161 together coordinate Fe cation. Residue glutamate 162 is part of the active site. Histidine 165 contributes to the Fe cation binding site.

It belongs to the polypeptide deformylase family. Fe(2+) serves as cofactor.

It catalyses the reaction N-terminal N-formyl-L-methionyl-[peptide] + H2O = N-terminal L-methionyl-[peptide] + formate. Removes the formyl group from the N-terminal Met of newly synthesized proteins. Requires at least a dipeptide for an efficient rate of reaction. N-terminal L-methionine is a prerequisite for activity but the enzyme has broad specificity at other positions. This Erythrobacter litoralis (strain HTCC2594) protein is Peptide deformylase.